The sequence spans 360 residues: Coiled-coil domain-containing protein 86 (360 aa).

Residues 1–12 (MDTPLRRSRRLG) show a composition bias toward basic residues. 2 disordered regions span residues 1–314 (MDTP…ENER) and 328–360 (LKRA…AAKI). S21, S24, S47, S50, and S58 each carry phosphoserine. Residue T65 is modified to Phosphothreonine. Phosphoserine is present on residues S66, S69, S80, S91, S102, S110, S113, and S128. Residues 66 to 83 (SPGSPRLQQGSGLESPQG) are compositionally biased toward polar residues. The segment covering 153-164 (QLPPVPGSPEPY) has biased composition (pro residues). Phosphoserine is present on residues S188, S217, and S218. Basic residues predominate over residues 238–254 (GKPKSGRVWKDRSKKRF). The stretch at 272–323 (KERQERKLAKDFARHLEEEKERRRQEKKQRRAENLKRRLENERKAEVVQVIR) forms a coiled coil. Composition is skewed to basic and acidic residues over residues 273–295 (ERQE…ERRR) and 302–314 (RAEN…ENER). Citrulline is present on R342.

In terms of processing, citrullinated by PADI4.

Its subcellular location is the nucleus. The protein resides in the chromosome. It localises to the nucleolus. In terms of biological role, required for proper chromosome segregation during mitosis and error-free mitotic progression. The sequence is that of Coiled-coil domain-containing protein 86 from Pongo abelii (Sumatran orangutan).